The following is a 398-amino-acid chain: Dual-specificity RNA methyltransferase RlmN (398 aa).

Catalysis depends on Glu-119, which acts as the Proton acceptor. Residues 125 to 364 (EEERATLCVS…TIVRKTRGDD (240 aa)) form the Radical SAM core domain. A disulfide bridge links Cys-132 with Cys-369. Positions 139, 143, and 146 each coordinate [4Fe-4S] cluster. S-adenosyl-L-methionine is bound by residues 193–194 (GE), Ser-225, 247–249 (SLH), and Asn-326. Cys-369 functions as the S-methylcysteine intermediate in the catalytic mechanism.

The protein belongs to the radical SAM superfamily. RlmN family. [4Fe-4S] cluster serves as cofactor.

Its subcellular location is the cytoplasm. It carries out the reaction adenosine(2503) in 23S rRNA + 2 reduced [2Fe-2S]-[ferredoxin] + 2 S-adenosyl-L-methionine = 2-methyladenosine(2503) in 23S rRNA + 5'-deoxyadenosine + L-methionine + 2 oxidized [2Fe-2S]-[ferredoxin] + S-adenosyl-L-homocysteine. It catalyses the reaction adenosine(37) in tRNA + 2 reduced [2Fe-2S]-[ferredoxin] + 2 S-adenosyl-L-methionine = 2-methyladenosine(37) in tRNA + 5'-deoxyadenosine + L-methionine + 2 oxidized [2Fe-2S]-[ferredoxin] + S-adenosyl-L-homocysteine. Its function is as follows. Specifically methylates position 2 of adenine 2503 in 23S rRNA and position 2 of adenine 37 in tRNAs. m2A2503 modification seems to play a crucial role in the proofreading step occurring at the peptidyl transferase center and thus would serve to optimize ribosomal fidelity. The polypeptide is Dual-specificity RNA methyltransferase RlmN (Pectobacterium atrosepticum (strain SCRI 1043 / ATCC BAA-672) (Erwinia carotovora subsp. atroseptica)).